Consider the following 623-residue polypeptide: Serine/threonine-protein kinase MAK (623 aa).

A Protein kinase domain is found at 4 to 284 (YTTMRQLGDG…ASQALKHPYF (281 aa)). Residues 10-18 (LGDGTYGSV) and Lys-33 each bind ATP. The active-site Proton acceptor is the Asp-125. Thr-157 carries the phosphothreonine; by autocatalysis modification. Tyr-159 bears the Phosphotyrosine; by autocatalysis mark. 2 disordered regions span residues 328-396 (IDQV…RRRW) and 416-469 (GASH…SDSE). The span at 356-369 (QQPPKQQSQEKPPQ) shows a compositional bias: low complexity. Polar residues predominate over residues 446-455 (SGSNHSTGEN).

This sequence belongs to the protein kinase superfamily. CMGC Ser/Thr protein kinase family. CDC2/CDKX subfamily. Interacts with RP1. Interacts with AR and CDK20. Found in a complex containing MAK, AR and NCOA3. Interacts with FZR1 (via WD repeats). It depends on Mg(2+) as a cofactor. Post-translationally, autophosphorylated. Phosphorylated on serine and threonine residues. Expressed in prostate cancer cell lines at generally higher levels than in normal prostate epithelial cell lines. Isoform 1 is expressed in kidney, testis, lung, trachea, and retina. Isoform 2 is retina-specific where it is expressed in rod and cone photoreceptors.

Its subcellular location is the nucleus. It localises to the cytoplasm. It is found in the cytoskeleton. The protein resides in the microtubule organizing center. The protein localises to the centrosome. Its subcellular location is the spindle. It localises to the midbody. It is found in the cell projection. The protein resides in the cilium. The protein localises to the photoreceptor outer segment. Its subcellular location is the photoreceptor inner segment. It catalyses the reaction L-seryl-[protein] + ATP = O-phospho-L-seryl-[protein] + ADP + H(+). It carries out the reaction L-threonyl-[protein] + ATP = O-phospho-L-threonyl-[protein] + ADP + H(+). Its function is as follows. Essential for the regulation of ciliary length and required for the long-term survival of photoreceptors. Phosphorylates FZR1 in a cell cycle-dependent manner. Plays a role in the transcriptional coactivation of AR. Could play an important function in spermatogenesis. May play a role in chromosomal stability in prostate cancer cells. The protein is Serine/threonine-protein kinase MAK (MAK) of Homo sapiens (Human).